A 455-amino-acid polypeptide reads, in one-letter code: Kynurenine 3-monooxygenase (455 aa).

2 helical membrane passes run 393–416 (WLFRLFPTIWVPLYNSVSFTSMPY) and 429–453 (LLWRTFLGFIVVGLGVTGSAIYWQR).

This sequence belongs to the aromatic-ring hydroxylase family. KMO subfamily. The cofactor is FAD.

It localises to the mitochondrion. Its subcellular location is the membrane. It catalyses the reaction L-kynurenine + NADPH + O2 + H(+) = 3-hydroxy-L-kynurenine + NADP(+) + H2O. Its pathway is cofactor biosynthesis; NAD(+) biosynthesis; quinolinate from L-kynurenine: step 1/3. Its function is as follows. Catalyzes the hydroxylation of L-kynurenine (L-Kyn) to form 3-hydroxy-L-kynurenine (L-3OHKyn). Required for synthesis of quinolinic acid. This is Kynurenine 3-monooxygenase from Drosophila willistoni (Fruit fly).